The chain runs to 314 residues: Aspartate carbamoyltransferase catalytic subunit (314 aa).

Carbamoyl phosphate contacts are provided by R53 and T54. K82 contacts L-aspartate. Carbamoyl phosphate-binding residues include R103, H131, and Q134. L-aspartate-binding residues include R164 and R230. 2 residues coordinate carbamoyl phosphate: L267 and P268.

Belongs to the aspartate/ornithine carbamoyltransferase superfamily. ATCase family. Heterooligomer of catalytic and regulatory chains.

The catalysed reaction is carbamoyl phosphate + L-aspartate = N-carbamoyl-L-aspartate + phosphate + H(+). It functions in the pathway pyrimidine metabolism; UMP biosynthesis via de novo pathway; (S)-dihydroorotate from bicarbonate: step 2/3. Catalyzes the condensation of carbamoyl phosphate and aspartate to form carbamoyl aspartate and inorganic phosphate, the committed step in the de novo pyrimidine nucleotide biosynthesis pathway. The chain is Aspartate carbamoyltransferase catalytic subunit from Methanococcus aeolicus (strain ATCC BAA-1280 / DSM 17508 / OCM 812 / Nankai-3).